The primary structure comprises 216 residues: Probable nicotinate-nucleotide adenylyltransferase (216 aa).

It belongs to the NadD family.

It carries out the reaction nicotinate beta-D-ribonucleotide + ATP + H(+) = deamido-NAD(+) + diphosphate. It participates in cofactor biosynthesis; NAD(+) biosynthesis; deamido-NAD(+) from nicotinate D-ribonucleotide: step 1/1. Its function is as follows. Catalyzes the reversible adenylation of nicotinate mononucleotide (NaMN) to nicotinic acid adenine dinucleotide (NaAD). This Geobacter sulfurreducens (strain ATCC 51573 / DSM 12127 / PCA) protein is Probable nicotinate-nucleotide adenylyltransferase.